The sequence spans 201 residues: Glycerol-3-phosphate acyltransferase (201 aa).

A run of 5 helical transmembrane segments spans residues 5 to 25 (LLGALLVAAGYLAGSIPFGVV), 55 to 75 (KMGVLVLVLDAAKAIVPILVA), 87 to 107 (FWVTAVAVAAFVGHLFPVWLG), 118 to 138 (LGIFAVLAPWAALAGLVGYAV), and 164 to 184 (TYGPRHPVSWAGLAIALLIFV).

The protein belongs to the PlsY family. As to quaternary structure, probably interacts with PlsX.

The protein localises to the cell inner membrane. The enzyme catalyses an acyl phosphate + sn-glycerol 3-phosphate = a 1-acyl-sn-glycero-3-phosphate + phosphate. It functions in the pathway lipid metabolism; phospholipid metabolism. Its function is as follows. Catalyzes the transfer of an acyl group from acyl-phosphate (acyl-PO(4)) to glycerol-3-phosphate (G3P) to form lysophosphatidic acid (LPA). This enzyme utilizes acyl-phosphate as fatty acyl donor, but not acyl-CoA or acyl-ACP. This is Glycerol-3-phosphate acyltransferase from Anaeromyxobacter dehalogenans (strain 2CP-1 / ATCC BAA-258).